A 138-amino-acid polypeptide reads, in one-letter code: MFTSLHTPILHPRYCHHPTPSCTQFSPLALPPFHRTLSFLAPPPLLPAAPALSAASAAKPDKSGEQKWVHEGLIMESLPNGMFRVRLDNEDLILGYISGKIRKNYVRILPGDRVKVEVTRYDSSKGRIVYRLRSSTPS.

The N-terminal 53 residues, 1-53 (MFTSLHTPILHPRYCHHPTPSCTQFSPLALPPFHRTLSFLAPPPLLPAAPALS), are a transit peptide targeting the chloroplast. Positions 58–133 (AKPDKSGEQK…SKGRIVYRLR (76 aa)) constitute an S1-like domain.

The protein belongs to the IF-1 family. As to quaternary structure, component of the 30S ribosomal translation pre-initiation complex which assembles on the 30S ribosome in the order IF-2 and IF-3, IF-1 and N-formylmethionyl-tRNA(fMet); mRNA recruitment can occur at any time during PIC assembly.

It localises to the plastid. Its subcellular location is the chloroplast. Its function is as follows. One of the essential components for the initiation of protein synthesis. Stabilizes the binding of IF-2 and IF-3 on the 30S subunit to which N-formylmethionyl-tRNA(fMet) subsequently binds. Helps modulate mRNA selection, yielding the 30S pre-initiation complex (PIC). Upon addition of the 50S ribosomal subunit IF-1, IF-2 and IF-3 are released leaving the mature 70S translation initiation complex. The chain is Translation initiation factor IF-1, chloroplastic (infA) from Glycine max (Soybean).